Reading from the N-terminus, the 605-residue chain is MAPSSPEVSRIRNFCIIAHIDHGKSTLADRLLEMTHTLDRTQMDSAQVLDDMDLERERGITIKSHAVQMKYCSVAGDDYTLNLIDTPGHVDFSYEVSRSLAACEGALLVVDATQGVEAQTIANLYLAIEAGLEIIPVINKIDLPSSDVEGVASQIIDLIGIEREEILQVSAKAGLGVPELMEAIIARVPSPADNGHLPLRALIFDSVFDAYRGAVVYLRIVDGVLRKGDRVRFFANNKVFLADEIGTMSMKRQPKQVLEAGDVGYLICSIKDVKDAKVGDTVTHADAPADKRLAGYKDVKPMVFSGLYPVNSNEFEDLRESLEKLSLNDASLVYTPETSVALGFGFRCGFLGLLHMEIIQERLEREYNMNIITTVPNVEYRVLMTNGETVIVDNPSKMPDTARITNVEEPYVSMQIITLADYIGNIMKLGMERRGEYRNTDYLDTKRVCMHFEFPLSEIVFDFHDRLKSISKGYASMDYEYIGYRESELVKLDVLLNGEPVDALSIIVHRSKAYDWGRKLCGKLKGIIPKQMYEVAIQAAIGSRIISRETISAMRKNVLAKCYGGDISRKRKLIEKQKEGKKRMKQVGRVEVPQEAFLAILNIDE.

The 184-residue stretch at 9-192 (SRIRNFCIIA…AIIARVPSPA (184 aa)) folds into the tr-type G domain. GTP contacts are provided by residues 21–26 (DHGKST) and 139–142 (NKID).

Belongs to the TRAFAC class translation factor GTPase superfamily. Classic translation factor GTPase family. LepA subfamily.

The protein localises to the cell inner membrane. The catalysed reaction is GTP + H2O = GDP + phosphate + H(+). In terms of biological role, required for accurate and efficient protein synthesis under certain stress conditions. May act as a fidelity factor of the translation reaction, by catalyzing a one-codon backward translocation of tRNAs on improperly translocated ribosomes. Back-translocation proceeds from a post-translocation (POST) complex to a pre-translocation (PRE) complex, thus giving elongation factor G a second chance to translocate the tRNAs correctly. Binds to ribosomes in a GTP-dependent manner. This is Elongation factor 4 from Chlorobium phaeovibrioides (strain DSM 265 / 1930) (Prosthecochloris vibrioformis (strain DSM 265)).